Reading from the N-terminus, the 158-residue chain is MAIFEGSFTSASTLKVGIVIARFNDLITNKILSGCLDCLKRHGLDTSELSNQVDIVWVPGSFELPIAAKTLMKKKSYDVVIALGAVIRGETSHYDVVISEASKGISQVSNENNVPIIFGVLTTDTMQQALERAGIKNNLGWNYALQAIEMGSLIKNLN.

Residues Phe-23, 61-63, and 85-87 contribute to the 5-amino-6-(D-ribitylamino)uracil site; these read SFE and AVI. (2S)-2-hydroxy-3-oxobutyl phosphate is bound at residue 90-91; that stretch reads ET. His-93 serves as the catalytic Proton donor. Residue Phe-118 coordinates 5-amino-6-(D-ribitylamino)uracil. Arg-132 contributes to the (2S)-2-hydroxy-3-oxobutyl phosphate binding site.

This sequence belongs to the DMRL synthase family.

It catalyses the reaction (2S)-2-hydroxy-3-oxobutyl phosphate + 5-amino-6-(D-ribitylamino)uracil = 6,7-dimethyl-8-(1-D-ribityl)lumazine + phosphate + 2 H2O + H(+). It participates in cofactor biosynthesis; riboflavin biosynthesis; riboflavin from 2-hydroxy-3-oxobutyl phosphate and 5-amino-6-(D-ribitylamino)uracil: step 1/2. Functionally, catalyzes the formation of 6,7-dimethyl-8-ribityllumazine by condensation of 5-amino-6-(D-ribitylamino)uracil with 3,4-dihydroxy-2-butanone 4-phosphate. This is the penultimate step in the biosynthesis of riboflavin. The sequence is that of 6,7-dimethyl-8-ribityllumazine synthase from Prochlorococcus marinus (strain MIT 9312).